The following is a 185-amino-acid chain: Protein GrpE (185 aa).

Residues 1-12 (MADEQLNEKDLN) show a composition bias toward basic and acidic residues. The tract at residues 1-22 (MADEQLNEKDLNVEETGAGNAA) is disordered.

This sequence belongs to the GrpE family. Homodimer.

The protein localises to the cytoplasm. In terms of biological role, participates actively in the response to hyperosmotic and heat shock by preventing the aggregation of stress-denatured proteins, in association with DnaK and GrpE. It is the nucleotide exchange factor for DnaK and may function as a thermosensor. Unfolded proteins bind initially to DnaJ; upon interaction with the DnaJ-bound protein, DnaK hydrolyzes its bound ATP, resulting in the formation of a stable complex. GrpE releases ADP from DnaK; ATP binding to DnaK triggers the release of the substrate protein, thus completing the reaction cycle. Several rounds of ATP-dependent interactions between DnaJ, DnaK and GrpE are required for fully efficient folding. This Pseudomonas putida (strain ATCC 700007 / DSM 6899 / JCM 31910 / BCRC 17059 / LMG 24140 / F1) protein is Protein GrpE.